Consider the following 475-residue polypeptide: Ribulose bisphosphate carboxylase large chain (475 aa).

The propeptide occupies 1–2; that stretch reads MS. Proline 3 carries the post-translational modification N-acetylproline. Lysine 14 is modified (N6,N6,N6-trimethyllysine). 2 residues coordinate substrate: asparagine 123 and threonine 173. Lysine 175 acts as the Proton acceptor in catalysis. Residue lysine 177 coordinates substrate. Mg(2+) is bound by residues lysine 201, aspartate 203, and glutamate 204. Lysine 201 bears the N6-carboxylysine mark. Catalysis depends on histidine 294, which acts as the Proton acceptor. Positions 295, 327, and 379 each coordinate substrate.

This sequence belongs to the RuBisCO large chain family. Type I subfamily. As to quaternary structure, heterohexadecamer of 8 large chains and 8 small chains; disulfide-linked. The disulfide link is formed within the large subunit homodimers. It depends on Mg(2+) as a cofactor. In terms of processing, the disulfide bond which can form in the large chain dimeric partners within the hexadecamer appears to be associated with oxidative stress and protein turnover.

The protein resides in the plastid. It localises to the chloroplast. It catalyses the reaction 2 (2R)-3-phosphoglycerate + 2 H(+) = D-ribulose 1,5-bisphosphate + CO2 + H2O. It carries out the reaction D-ribulose 1,5-bisphosphate + O2 = 2-phosphoglycolate + (2R)-3-phosphoglycerate + 2 H(+). RuBisCO catalyzes two reactions: the carboxylation of D-ribulose 1,5-bisphosphate, the primary event in carbon dioxide fixation, as well as the oxidative fragmentation of the pentose substrate in the photorespiration process. Both reactions occur simultaneously and in competition at the same active site. This chain is Ribulose bisphosphate carboxylase large chain, found in Pinus edulis (Pinyon pine).